Reading from the N-terminus, the 239-residue chain is Glucosamine-6-phosphate deaminase (239 aa).

The Proton acceptor; for enolization step role is filled by Asp-62. Residue Asn-128 is the For ring-opening step of the active site. The active-site Proton acceptor; for ring-opening step is the His-130. The active-site For ring-opening step is Glu-135.

This sequence belongs to the glucosamine/galactosamine-6-phosphate isomerase family. NagB subfamily.

The catalysed reaction is alpha-D-glucosamine 6-phosphate + H2O = beta-D-fructose 6-phosphate + NH4(+). The protein operates within amino-sugar metabolism; N-acetylneuraminate degradation; D-fructose 6-phosphate from N-acetylneuraminate: step 5/5. In terms of biological role, catalyzes the reversible isomerization-deamination of glucosamine 6-phosphate (GlcN6P) to form fructose 6-phosphate (Fru6P) and ammonium ion. The protein is Glucosamine-6-phosphate deaminase of Lactobacillus johnsonii (strain CNCM I-12250 / La1 / NCC 533).